The chain runs to 614 residues: UvrABC system protein C (614 aa).

The GIY-YIG domain maps to 25–103 (SVPGVYKMFG…IKSLKPKYNI (79 aa)). The UVR domain occupies 214 to 249 (KEIQCELFEMMCRFSNNQDYESAIVCRDRLHALKSM).

It belongs to the UvrC family. As to quaternary structure, interacts with UvrB in an incision complex.

It localises to the cytoplasm. The UvrABC repair system catalyzes the recognition and processing of DNA lesions. UvrC both incises the 5' and 3' sides of the lesion. The N-terminal half is responsible for the 3' incision and the C-terminal half is responsible for the 5' incision. This is UvrABC system protein C from Anaplasma phagocytophilum (strain HZ).